Here is a 262-residue protein sequence, read N- to C-terminus: Thioredoxin-like protein HCF164, chloroplastic (262 aa).

Residues 1–54 (MAVVASRCTGLLLPDLGASLAGFRRRRSTPASSLSFRPRRARRRLGSLSCIAPP) constitute a chloroplast transit peptide. Residues 47–90 (SLSCIAPPDSAEPQTDEPAAKDDSTEDKAEASSASQDAGNPTFP) form a disordered region. Residues 64–76 (PAAKDDSTEDKAE) show a composition bias toward basic and acidic residues. The span at 78–89 (SSASQDAGNPTF) shows a compositional bias: polar residues. Positions 78–230 (SSASQDAGNP…FLDNVVALAS (153 aa)) constitute a Thioredoxin domain. Catalysis depends on nucleophile residues cysteine 151 and cysteine 154. Cysteine 151 and cysteine 154 are joined by a disulfide.

It belongs to the thioredoxin family.

Its subcellular location is the plastid. The protein localises to the chloroplast. Probable thiol-disulfide oxidoreductase that may participate in various redox reactions in the chloroplast. This Oryza sativa subsp. japonica (Rice) protein is Thioredoxin-like protein HCF164, chloroplastic.